We begin with the raw amino-acid sequence, 346 residues long: Peroxidase 19 (346 aa).

The signal sequence occupies residues 1-31 (MHVISLSLSSIFFFLFLTSTILISPVQPTTS). Cystine bridges form between Cys51-Cys134, Cys84-Cys89, Cys140-Cys342, and Cys219-Cys251. His82 (proton acceptor) is an active-site residue. Residues Asp83, Val86, Gly88, Asp90, and Ser92 each coordinate Ca(2+). Pro182 lines the substrate pocket. Asn185 carries N-linked (GlcNAc...) asparagine glycosylation. His212 lines the heme b pocket. Thr213 lines the Ca(2+) pocket. Ca(2+) contacts are provided by Asp265, Thr268, and Asp273.

The protein belongs to the peroxidase family. Classical plant (class III) peroxidase subfamily. Heme b serves as cofactor. Requires Ca(2+) as cofactor.

It localises to the secreted. It catalyses the reaction 2 a phenolic donor + H2O2 = 2 a phenolic radical donor + 2 H2O. Removal of H(2)O(2), oxidation of toxic reductants, biosynthesis and degradation of lignin, suberization, auxin catabolism, response to environmental stresses such as wounding, pathogen attack and oxidative stress. These functions might be dependent on each isozyme/isoform in each plant tissue. This Arabidopsis thaliana (Mouse-ear cress) protein is Peroxidase 19 (PER19).